The sequence spans 280 residues: Ribosomal RNA-processing protein 7 homolog A (280 aa).

A compositionally biased stretch (basic residues) spans 1 to 10 (MVSRRKKRKA). The interval 1-24 (MVSRRKKRKAGGHEESIPSPPGYS) is disordered. The RRM domain occupies 59–159 (RTLFILNVPP…SGIHKWISDY (101 aa)). Residue serine 99 is modified to Phosphoserine.

This sequence belongs to the RRP7 family. As to quaternary structure, part of the small subunit (SSU) processome, composed of more than 70 proteins and the RNA chaperone small nucleolar RNA (snoRNA) U3. Interacts with NOL6; required for NOL6 localization to nucleolus.

It localises to the nucleus. It is found in the nucleolus. The protein resides in the cell projection. The protein localises to the cilium. Its subcellular location is the cytoplasm. It localises to the cytoskeleton. It is found in the microtubule organizing center. The protein resides in the centrosome. Its function is as follows. Nucleolar protein that is involved in ribosomal RNA (rRNA) processing. Also plays a role in primary cilia resorption, and cell cycle progression in neurogenesis and neocortex development. Part of the small subunit (SSU) processome, first precursor of the small eukaryotic ribosomal subunit. During the assembly of the SSU processome in the nucleolus, many ribosome biogenesis factors, an RNA chaperone and ribosomal proteins associate with the nascent pre-rRNA and work in concert to generate RNA folding, modifications, rearrangements and cleavage as well as targeted degradation of pre-ribosomal RNA by the RNA exosome. The polypeptide is Ribosomal RNA-processing protein 7 homolog A (Rrp7a) (Mus musculus (Mouse)).